A 471-amino-acid chain; its full sequence is Ribosome biogenesis protein YTM1 (471 aa).

The ubiquitin-like (UBL) domain stretch occupies residues Val10–Arg92. WD repeat units follow at residues Ser119–Ser158, Gly165–Thr203, and Ser210–Ala249. Residues Glu245–Val274 are disordered. Positions Leu253 to Asn262 are enriched in polar residues. WD repeat units lie at residues Gly285 to Thr325, Thr327 to Ser366, Gly372 to Gln412, and Gly436 to Ser471. Positions Gln412–Gly440 are disordered.

This sequence belongs to the WD repeat WDR12/YTM1 family. In terms of assembly, component of the NOP7 complex, composed of ERB1, NOP7 and YTM1. The complex is held together by ERB1, which interacts with NOP7 via its N-terminal domain and with YTM1 via a high-affinity interaction between the seven-bladed beta-propeller domains of the 2 proteins. The NOP7 complex associates with the 66S pre-ribosome. Interacts (via UBL domain) with MDN1 (via VWFA/MIDAS domain).

The protein localises to the nucleus. It is found in the nucleolus. It localises to the nucleoplasm. In terms of biological role, component of the NOP7 complex, which is required for maturation of the 25S and 5.8S ribosomal RNAs and formation of the 60S ribosome. This is Ribosome biogenesis protein YTM1 from Phaeosphaeria nodorum (strain SN15 / ATCC MYA-4574 / FGSC 10173) (Glume blotch fungus).